The primary structure comprises 266 residues: MTKRTIEQILDELRRGRRPLLADKPAESDASRYDCLRCKDQGGYLVRQNGLEVWTMCSCMAERKVKRLLGASEITHAFRQLGFKEFRTEGKPQAIKDAFECTKEYVADYEQIKDCRKNSIALLGQPGSGKTHLLTAAANELMRTCYVPVIYFPFVEGFTDLKNDFALLEAKLNRMKQADVLFIDDLFKPVNGKPRATDWQLEQMYSVLNYRYLNHKPILLSSELTIEGLVRVDEALGTRIYEMCSDYLVIIKGAAYELNHRLEGVR.

124-131 is a binding site for ATP; sequence GQPGSGKT.

This sequence to B.subtilis YqaM.

May function as a transcriptional antiterminator. In Bacillus subtilis (strain 168), this protein is Phage-like element PBSX protein XkdC (xkdC).